The chain runs to 397 residues: Acetate kinase (397 aa).

A Mg(2+)-binding site is contributed by asparagine 7. Lysine 14 contributes to the ATP binding site. Substrate is bound at residue arginine 90. Residue aspartate 147 is the Proton donor/acceptor of the active site. Residues 207-211 (HLGNG), 282-284 (DFR), and 330-334 (GIGEN) contribute to the ATP site. A Mg(2+)-binding site is contributed by glutamate 384.

This sequence belongs to the acetokinase family. As to quaternary structure, homodimer. It depends on Mg(2+) as a cofactor. Requires Mn(2+) as cofactor.

Its subcellular location is the cytoplasm. The enzyme catalyses acetate + ATP = acetyl phosphate + ADP. It participates in metabolic intermediate biosynthesis; acetyl-CoA biosynthesis; acetyl-CoA from acetate: step 1/2. Its function is as follows. Catalyzes the formation of acetyl phosphate from acetate and ATP. Can also catalyze the reverse reaction. The chain is Acetate kinase from Agathobacter rectalis (strain ATCC 33656 / DSM 3377 / JCM 17463 / KCTC 5835 / VPI 0990) (Eubacterium rectale).